Here is a 431-residue protein sequence, read N- to C-terminus: Chaperone SurA (431 aa).

Positions 1–20 (MKLTVVTFALLAFISFNTFA) are cleaved as a signal peptide. 2 consecutive PpiC domains span residues 171–272 (QAEY…KIID) and 281–381 (VAEL…QLMD).

It is found in the periplasm. It catalyses the reaction [protein]-peptidylproline (omega=180) = [protein]-peptidylproline (omega=0). Chaperone involved in the correct folding and assembly of outer membrane proteins. Recognizes specific patterns of aromatic residues and the orientation of their side chains, which are found more frequently in integral outer membrane proteins. May act in both early periplasmic and late outer membrane-associated steps of protein maturation. In Pseudoalteromonas atlantica (strain T6c / ATCC BAA-1087), this protein is Chaperone SurA.